A 507-amino-acid chain; its full sequence is ATP synthase subunit alpha, chloroplastic (507 aa).

170-177 (GDRQTGKT) is an ATP binding site.

This sequence belongs to the ATPase alpha/beta chains family. F-type ATPases have 2 components, CF(1) - the catalytic core - and CF(0) - the membrane proton channel. CF(1) has five subunits: alpha(3), beta(3), gamma(1), delta(1), epsilon(1). CF(0) has four main subunits: a, b, b' and c.

It localises to the plastid. The protein localises to the chloroplast thylakoid membrane. It catalyses the reaction ATP + H2O + 4 H(+)(in) = ADP + phosphate + 5 H(+)(out). Produces ATP from ADP in the presence of a proton gradient across the membrane. The alpha chain is a regulatory subunit. The chain is ATP synthase subunit alpha, chloroplastic from Silene latifolia (White campion).